The chain runs to 176 residues: Ribosome maturation factor RimM (176 aa).

The region spanning Pro-96–Phe-176 is the PRC barrel domain.

The protein belongs to the RimM family. In terms of assembly, binds ribosomal protein uS19.

The protein localises to the cytoplasm. Its function is as follows. An accessory protein needed during the final step in the assembly of 30S ribosomal subunit, possibly for assembly of the head region. Essential for efficient processing of 16S rRNA. May be needed both before and after RbfA during the maturation of 16S rRNA. It has affinity for free ribosomal 30S subunits but not for 70S ribosomes. This Shewanella piezotolerans (strain WP3 / JCM 13877) protein is Ribosome maturation factor RimM.